The chain runs to 875 residues: GATOR2 complex protein MIOS (875 aa).

6 WD repeats span residues 58–100 (SDTP…NSKF), 111–155 (KHAR…TPDI), 182–221 (GQND…QKMF), 223–261 (NTKA…KPVL), 265–306 (EQPK…TPIG), and 395–437 (RLRA…KQYT). The segment at 735–781 (VSCNFCGKSISYSCSAVPHQGRGFSQYGVSGSPTKSKVTSCPGCRKP) adopts a C4-type zinc-finger fold. Cys-737 and Cys-740 together coordinate Zn(2+). Phosphoserine occurs at positions 759 and 766. The Zn(2+) site is built by Cys-775, Cys-778, Cys-788, Cys-827, Cys-830, His-832, His-835, His-838, Cys-849, Cys-854, and Cys-858. The segment at 782-863 (LPRCALCLIN…CTCKCMQLDT (82 aa)) adopts an RING-type; atypical zinc-finger fold.

Belongs to the WD repeat mio family. As to quaternary structure, component of the GATOR2 subcomplex, composed of MIOS, SEC13, SEH1L, WDR24 and WDR59. The GATOR2 complex interacts with CASTOR1 and CASTOR2; the interaction is negatively regulated by arginine. CASTOR1 and CASTOR2 convey leucine availability via direct interaction with MIOS. The GATOR2 complex interacts with SESN1, SESN2 and SESN3; the interaction is negatively regulated by amino acids. Interacts with SAR1A and SAR1B; the interaction is direct, disrupted by leucine and mediates the interaction of SAR1A or SAR1B with the GATOR2 complex to negatively regulate the TORC1 signaling upon leucine deprivation.

It localises to the lysosome membrane. Its activity is regulated as follows. The GATOR2 complex is negatively regulated by the upstream amino acid sensors CASTOR1 and SESN2, which sequester the GATOR2 complex in absence of amino acids. In the presence of abundant amino acids, GATOR2 is released from CASTOR1 and SESN2 and activated. As a component of the GATOR2 complex, functions as an activator of the amino acid-sensing branch of the mTORC1 signaling pathway. The GATOR2 complex indirectly activates mTORC1 through the inhibition of the GATOR1 subcomplex. GATOR2 probably acts as an E3 ubiquitin-protein ligase toward GATOR1. In the presence of abundant amino acids, the GATOR2 complex mediates ubiquitination of the NPRL2 core component of the GATOR1 complex, leading to GATOR1 inactivation. In the absence of amino acids, GATOR2 is inhibited, activating the GATOR1 complex. Within the GATOR2 complex, MIOS is required to prevent autoubiquitination of WDR24, the catalytic subunit of the complex. The GATOR2 complex is required for brain myelination. The chain is GATOR2 complex protein MIOS from Homo sapiens (Human).